The following is a 296-amino-acid chain: 33 kDa chaperonin (296 aa).

2 disulfides stabilise this stretch: cysteine 238–cysteine 240 and cysteine 271–cysteine 274.

The protein belongs to the HSP33 family. Under oxidizing conditions two disulfide bonds are formed involving the reactive cysteines. Under reducing conditions zinc is bound to the reactive cysteines and the protein is inactive.

The protein resides in the cytoplasm. In terms of biological role, redox regulated molecular chaperone. Protects both thermally unfolding and oxidatively damaged proteins from irreversible aggregation. Plays an important role in the bacterial defense system toward oxidative stress. This is 33 kDa chaperonin from Clostridium botulinum (strain 657 / Type Ba4).